The sequence spans 191 residues: Cathelicidin-related peptide Oh-Cath (191 aa).

The signal sequence occupies residues 1-22 (MEGFFWKTLLVVGALAIGGTSS). The propeptide occupies 23-161 (LPHKPLTYEE…DQPRRVKRFK (139 aa)). 2 disulfide bridges follow: C81/C92 and C103/C120. The segment covering 125-151 (EEEEQKQEEGNEEEKEVEKEEKEEDEK) has biased composition (acidic residues). Residues 125-154 (EEEEQKQEEGNEEEKEVEKEEKEEDEKDQP) form a disordered region.

It belongs to the cathelicidin family. Expressed by the venom gland.

Its subcellular location is the secreted. It localises to the target cell membrane. Functionally, potent antimicrobial peptide against Gram-negative (MIC=0.25 ug/ml against E.coli ATCC 25922, MIC=0.5 ug/ml against P.aeruginosa) and Gram-positive bacteria (MIC=64 ug/ml against E.faecalis, MIC=64 ug/ml against S.aureus). Adopts an amphipathic alpha helical conformation, that may allow to partition into the target membrane. Low hemolytic activities have been observed on mammalian cells. The chain is Cathelicidin-related peptide Oh-Cath from Ophiophagus hannah (King cobra).